Reading from the N-terminus, the 242-residue chain is Adapter protein MecA (242 aa).

The protein belongs to the MecA family. Homodimer.

Enables the recognition and targeting of unfolded and aggregated proteins to the ClpC protease or to other proteins involved in proteolysis. The sequence is that of Adapter protein MecA from Streptococcus gordonii (strain Challis / ATCC 35105 / BCRC 15272 / CH1 / DL1 / V288).